We begin with the raw amino-acid sequence, 93 residues long: UPF0358 protein BPUM_1375 (93 aa).

This sequence belongs to the UPF0358 family.

The protein is UPF0358 protein BPUM_1375 of Bacillus pumilus (strain SAFR-032).